Here is a 380-residue protein sequence, read N- to C-terminus: Cytochrome b (380 aa).

4 consecutive transmembrane segments (helical) span residues 34 to 54, 78 to 99, 114 to 134, and 179 to 199; these read FGSL…LLAM, WLIR…YLHI, WNIG…GYVL, and FFAL…VHLT. Heme b is bound by residues H84 and H98. Heme b contacts are provided by H183 and H197. H202 serves as a coordination point for a ubiquinone. Transmembrane regions (helical) follow at residues 227–247, 289–309, 321–341, and 348–368; these read IKDM…ALFS, LGGV…PLLH, LLPF…WVGS, and FIII…VLFP.

This sequence belongs to the cytochrome b family. As to quaternary structure, the cytochrome bc1 complex contains 11 subunits: 3 respiratory subunits (MT-CYB, CYC1 and UQCRFS1), 2 core proteins (UQCRC1 and UQCRC2) and 6 low-molecular weight proteins (UQCRH/QCR6, UQCRB/QCR7, UQCRQ/QCR8, UQCR10/QCR9, UQCR11/QCR10 and a cleavage product of UQCRFS1). This cytochrome bc1 complex then forms a dimer. The cofactor is heme b.

The protein resides in the mitochondrion inner membrane. Functionally, component of the ubiquinol-cytochrome c reductase complex (complex III or cytochrome b-c1 complex) that is part of the mitochondrial respiratory chain. The b-c1 complex mediates electron transfer from ubiquinol to cytochrome c. Contributes to the generation of a proton gradient across the mitochondrial membrane that is then used for ATP synthesis. This chain is Cytochrome b (MT-CYB), found in Gymnorhina tibicen (Australian magpie).